The chain runs to 134 residues: uncharacterized protein (134 aa).

The helical transmembrane segment at 110 to 130 (SLGVLTDILFLVLYSLLIHLS) threads the bilayer.

It localises to the membrane. This is an uncharacterized protein from Saccharomyces cerevisiae (strain ATCC 204508 / S288c) (Baker's yeast).